Here is a 307-residue protein sequence, read N- to C-terminus: UDP-3-O-acyl-N-acetylglucosamine deacetylase (307 aa).

The Zn(2+) site is built by H78, H241, and D245. H268 acts as the Proton donor in catalysis.

The protein belongs to the LpxC family. The cofactor is Zn(2+).

It carries out the reaction a UDP-3-O-[(3R)-3-hydroxyacyl]-N-acetyl-alpha-D-glucosamine + H2O = a UDP-3-O-[(3R)-3-hydroxyacyl]-alpha-D-glucosamine + acetate. It functions in the pathway glycolipid biosynthesis; lipid IV(A) biosynthesis; lipid IV(A) from (3R)-3-hydroxytetradecanoyl-[acyl-carrier-protein] and UDP-N-acetyl-alpha-D-glucosamine: step 2/6. Functionally, catalyzes the hydrolysis of UDP-3-O-myristoyl-N-acetylglucosamine to form UDP-3-O-myristoylglucosamine and acetate, the committed step in lipid A biosynthesis. This Variovorax paradoxus (strain S110) protein is UDP-3-O-acyl-N-acetylglucosamine deacetylase.